The following is a 699-amino-acid chain: Elongation factor G (699 aa).

The 281-residue stretch at 8-288 folds into the tr-type G domain; it reads EDYRNFGIMA…AVVDYLPSPL (281 aa). GTP contacts are provided by residues 17 to 24, 86 to 90, and 140 to 143; these read AHIDAGKT, DTPGH, and NKMD.

Belongs to the TRAFAC class translation factor GTPase superfamily. Classic translation factor GTPase family. EF-G/EF-2 subfamily.

It localises to the cytoplasm. In terms of biological role, catalyzes the GTP-dependent ribosomal translocation step during translation elongation. During this step, the ribosome changes from the pre-translocational (PRE) to the post-translocational (POST) state as the newly formed A-site-bound peptidyl-tRNA and P-site-bound deacylated tRNA move to the P and E sites, respectively. Catalyzes the coordinated movement of the two tRNA molecules, the mRNA and conformational changes in the ribosome. The polypeptide is Elongation factor G (Rhizobium etli (strain CIAT 652)).